Consider the following 213-residue polypeptide: Proteasome subunit beta (213 aa).

A propeptide spans 1-11 (MSMIEEKIYKG) (removed in mature form; by autocatalysis). Residue Thr12 is the Nucleophile of the active site.

The protein belongs to the peptidase T1B family. As to quaternary structure, the 20S proteasome core is composed of 14 alpha and 14 beta subunits that assemble into four stacked heptameric rings, resulting in a barrel-shaped structure. The two inner rings, each composed of seven catalytic beta subunits, are sandwiched by two outer rings, each composed of seven alpha subunits. The catalytic chamber with the active sites is on the inside of the barrel. Has probably a gated structure, the ends of the cylinder being occluded by the N-termini of the alpha-subunits. Is likely capped at one or both ends by the proteasome regulatory ATPase, PAN.

It is found in the cytoplasm. The enzyme catalyses Cleavage of peptide bonds with very broad specificity.. Its activity is regulated as follows. The formation of the proteasomal ATPase PAN-20S proteasome complex, via the docking of the C-termini of PAN into the intersubunit pockets in the alpha-rings, triggers opening of the gate for substrate entry. Interconversion between the open-gate and close-gate conformations leads to a dynamic regulation of the 20S proteasome proteolysis activity. Functionally, component of the proteasome core, a large protease complex with broad specificity involved in protein degradation. The protein is Proteasome subunit beta of Archaeoglobus fulgidus (strain ATCC 49558 / DSM 4304 / JCM 9628 / NBRC 100126 / VC-16).